Here is a 663-residue protein sequence, read N- to C-terminus: Tripartite terminase subunit 3 (663 aa).

Positions 205 to 212 match the Walker A motif motif; that stretch reads VPRRHGKT. A Walker B motif motif is present at residues 297 to 302; it reads LLIVDE. Residue Glu302 is the For ATPase activity of the active site. Residues Asp455, Glu526, and Asp640 each act as for nuclease activity in the active site.

Belongs to the herpesviridae TRM3 protein family. Interacts with the terminase subunits TRM1 and TRM2. Interacts with portal protein.

The protein localises to the host nucleus. In terms of biological role, component of the molecular motor that translocates viral genomic DNA in empty capsid during DNA packaging. Forms a tripartite terminase complex together with TRM1 and TRM2 in the host cytoplasm. Once the complex reaches the host nucleus, it interacts with the capsid portal vertex. This portal forms a ring in which genomic DNA is translocated into the capsid. TRM3 carries an RNase H-like nuclease activity that plays an important role for the cleavage of concatemeric viral DNA into unit length genomes. In Human herpesvirus 7 (strain JI) (HHV-7), this protein is Tripartite terminase subunit 3.